The primary structure comprises 123 residues: MPTINQLVRKPRKSRSSLNKAPALQHNPQKRAVCVKVYTTTPKKPNSALRKVARVKIAGYGSEVIAYIPGEGHNLQEHSVILIRGGRVKDLPGVRYHIIRGALDSRGVQNRKKARSKYGVKKS.

Residues 1 to 26 (MPTINQLVRKPRKSRSSLNKAPALQH) are disordered. Asp-90 is subject to 3-methylthioaspartic acid.

Belongs to the universal ribosomal protein uS12 family. In terms of assembly, part of the 30S ribosomal subunit. Contacts proteins S8 and S17. May interact with IF1 in the 30S initiation complex.

With S4 and S5 plays an important role in translational accuracy. In terms of biological role, interacts with and stabilizes bases of the 16S rRNA that are involved in tRNA selection in the A site and with the mRNA backbone. Located at the interface of the 30S and 50S subunits, it traverses the body of the 30S subunit contacting proteins on the other side and probably holding the rRNA structure together. The combined cluster of proteins S8, S12 and S17 appears to hold together the shoulder and platform of the 30S subunit. The sequence is that of Small ribosomal subunit protein uS12 from Ehrlichia chaffeensis (strain ATCC CRL-10679 / Arkansas).